The following is a 332-amino-acid chain: 2,3-diketo-L-gulonate reductase (332 aa).

The Proton donor role is filled by histidine 44. NAD(+)-binding positions include 168–174 (ITMVDMS), 224–225 (WK), and 304–306 (GHE).

Belongs to the LDH2/MDH2 oxidoreductase family. DlgD subfamily. Homodimer.

It localises to the cytoplasm. The catalysed reaction is 3-dehydro-L-gulonate + NAD(+) = 2,3-dioxo-L-gulonate + NADH + H(+). It carries out the reaction 3-dehydro-L-gulonate + NADP(+) = 2,3-dioxo-L-gulonate + NADPH + H(+). Its function is as follows. Catalyzes the reduction of 2,3-diketo-L-gulonate in the presence of NADH, to form 3-keto-L-gulonate. This Salmonella paratyphi B (strain ATCC BAA-1250 / SPB7) protein is 2,3-diketo-L-gulonate reductase.